We begin with the raw amino-acid sequence, 401 residues long: Enolase (401 aa).

Gln154 serves as a coordination point for (2R)-2-phosphoglycerate. Residue Glu196 is the Proton donor of the active site. Asp232, Glu275, and Asp302 together coordinate Mg(2+). Positions 327, 356, 357, and 378 each coordinate (2R)-2-phosphoglycerate. The Proton acceptor role is filled by Lys327.

This sequence belongs to the enolase family. It depends on Mg(2+) as a cofactor.

The protein resides in the cytoplasm. The protein localises to the secreted. It localises to the cell surface. The catalysed reaction is (2R)-2-phosphoglycerate = phosphoenolpyruvate + H2O. It participates in carbohydrate degradation; glycolysis; pyruvate from D-glyceraldehyde 3-phosphate: step 4/5. Catalyzes the reversible conversion of 2-phosphoglycerate (2-PG) into phosphoenolpyruvate (PEP). It is essential for the degradation of carbohydrates via glycolysis. The sequence is that of Enolase from Haloquadratum walsbyi (strain DSM 16790 / HBSQ001).